Consider the following 304-residue polypeptide: ATP phosphoribosyltransferase (304 aa).

Belongs to the ATP phosphoribosyltransferase family. Long subfamily. Mg(2+) is required as a cofactor.

The protein resides in the cytoplasm. It catalyses the reaction 1-(5-phospho-beta-D-ribosyl)-ATP + diphosphate = 5-phospho-alpha-D-ribose 1-diphosphate + ATP. It functions in the pathway amino-acid biosynthesis; L-histidine biosynthesis; L-histidine from 5-phospho-alpha-D-ribose 1-diphosphate: step 1/9. Its activity is regulated as follows. Feedback inhibited by histidine. Its function is as follows. Catalyzes the condensation of ATP and 5-phosphoribose 1-diphosphate to form N'-(5'-phosphoribosyl)-ATP (PR-ATP). Has a crucial role in the pathway because the rate of histidine biosynthesis seems to be controlled primarily by regulation of HisG enzymatic activity. This is ATP phosphoribosyltransferase from Xylella fastidiosa (strain M12).